The chain runs to 499 residues: Maturase K (499 aa).

It belongs to the intron maturase 2 family. MatK subfamily.

The protein resides in the plastid. Its subcellular location is the chloroplast. In terms of biological role, usually encoded in the trnK tRNA gene intron. Probably assists in splicing its own and other chloroplast group II introns. In Camellia sasanqua (Christmas camellia), this protein is Maturase K.